The following is a 272-amino-acid chain: B3 domain-containing protein Os10g0323000 (272 aa).

Residues 39–132 (RYGENRKHGQ…TLDLLILDKH (94 aa)) constitute a DNA-binding region (TF-B3 1). Residues 139–171 (PPSKRDLKLKSKRSTHQDSKGHPSNTDPGPSRI) form a disordered region. Positions 141–159 (SKRDLKLKSKRSTHQDSKG) are enriched in basic and acidic residues. The TF-B3 2 DNA-binding region spans 180-272 (ESSANTQLLV…THLGVIVDIF (93 aa)).

The protein localises to the nucleus. The polypeptide is B3 domain-containing protein Os10g0323000 (Oryza sativa subsp. japonica (Rice)).